Here is a 420-residue protein sequence, read N- to C-terminus: 2',3'-cyclic-nucleotide 3'-phosphodiesterase (420 aa).

The residue at position 9 (serine 9) is a Phosphoserine. The residue at position 110 (tyrosine 110) is a Phosphotyrosine. 3 positions are modified to phosphoserine: serine 169, serine 227, and serine 239. Catalysis depends on histidine 250, which acts as the Proton acceptor. Threonine 252 is a binding site for substrate. Residue threonine 262 is modified to Phosphothreonine. Histidine 329 (proton donor) is an active-site residue. Threonine 331 serves as a coordination point for substrate. Serine 358 carries the phosphoserine modification. Cysteine methyl ester is present on cysteine 417. A lipid anchor (S-farnesyl cysteine) is attached at cysteine 417. Residues 418-420 (TII) constitute a propeptide, removed in mature form.

The protein belongs to the 2H phosphoesterase superfamily. CNPase family. Exists as monomers and homodimers.

Its subcellular location is the membrane. It is found in the melanosome. The enzyme catalyses a nucleoside 2',3'-cyclic phosphate + H2O = a nucleoside 2'-phosphate + H(+). In terms of biological role, catalyzes the formation of 2'-nucleotide products from 2',3'-cyclic substrates. May participate in RNA metabolism in the myelinating cell, CNP is the third most abundant protein in central nervous system myelin. The protein is 2',3'-cyclic-nucleotide 3'-phosphodiesterase of Rattus norvegicus (Rat).